We begin with the raw amino-acid sequence, 306 residues long: UDP-3-O-acyl-N-acetylglucosamine deacetylase (306 aa).

Residues histidine 79, histidine 238, and aspartate 242 each contribute to the Zn(2+) site. Histidine 265 acts as the Proton donor in catalysis.

It belongs to the LpxC family. Requires Zn(2+) as cofactor.

It carries out the reaction a UDP-3-O-[(3R)-3-hydroxyacyl]-N-acetyl-alpha-D-glucosamine + H2O = a UDP-3-O-[(3R)-3-hydroxyacyl]-alpha-D-glucosamine + acetate. The protein operates within glycolipid biosynthesis; lipid IV(A) biosynthesis; lipid IV(A) from (3R)-3-hydroxytetradecanoyl-[acyl-carrier-protein] and UDP-N-acetyl-alpha-D-glucosamine: step 2/6. In terms of biological role, catalyzes the hydrolysis of UDP-3-O-myristoyl-N-acetylglucosamine to form UDP-3-O-myristoylglucosamine and acetate, the committed step in lipid A biosynthesis. This is UDP-3-O-acyl-N-acetylglucosamine deacetylase from Shewanella halifaxensis (strain HAW-EB4).